We begin with the raw amino-acid sequence, 997 residues long: Pro-apoptotic serine protease NMA111 (997 aa).

Residues 1–43 (MTISLSNIKKRDHSKISDGTSGESSLVKRKQLESATGDQEEEY) form a disordered region. The segment at 83–273 (VVSIHFSQVA…LPLDRILRAL (191 aa)) is serine protease. Active-site charge relay system residues include His-121, Asp-152, and Ser-235. PDZ domains lie at 300–378 (RRLG…QRGG) and 779–854 (EEWI…VRDG).

The protein belongs to the peptidase S1C family. In terms of assembly, interacts with BIR1.

It is found in the nucleus. Nuclear serine protease which mediates apoptosis through proteolysis of the apoptotic inhibitor BIR1. This Saccharomyces cerevisiae (strain YJM789) (Baker's yeast) protein is Pro-apoptotic serine protease NMA111 (NMA111).